The following is an 86-amino-acid chain: Large ribosomal subunit protein bL27 (86 aa).

Residues 1–24 (MATKKAGGSSRNGRDSAGRRLGVK) form a disordered region.

This sequence belongs to the bacterial ribosomal protein bL27 family.

This is Large ribosomal subunit protein bL27 from Rickettsia felis (strain ATCC VR-1525 / URRWXCal2) (Rickettsia azadi).